The primary structure comprises 534 residues: Peptide chain release factor 3 (534 aa).

The tr-type G domain occupies 9-278; sequence SRRRTFAIIS…FFVEHAPSPQ (270 aa). GTP contacts are provided by residues 18-25, 86-90, and 140-143; these read SHPDAGKT, DTPGH, and NKLD.

The protein belongs to the TRAFAC class translation factor GTPase superfamily. Classic translation factor GTPase family. PrfC subfamily.

The protein resides in the cytoplasm. Increases the formation of ribosomal termination complexes and stimulates activities of RF-1 and RF-2. It binds guanine nucleotides and has strong preference for UGA stop codons. It may interact directly with the ribosome. The stimulation of RF-1 and RF-2 is significantly reduced by GTP and GDP, but not by GMP. In Stenotrophomonas maltophilia (strain K279a), this protein is Peptide chain release factor 3.